The chain runs to 203 residues: Acireductone dioxygenase 3 (203 aa).

4 residues coordinate Fe(2+): histidine 96, histidine 98, glutamate 102, and histidine 141. Residues histidine 96, histidine 98, glutamate 102, and histidine 141 each coordinate Ni(2+).

It belongs to the acireductone dioxygenase (ARD) family. It depends on Fe(2+) as a cofactor. Ni(2+) is required as a cofactor.

It localises to the cytoplasm. Its subcellular location is the nucleus. It carries out the reaction 1,2-dihydroxy-5-(methylsulfanyl)pent-1-en-3-one + O2 = 4-methylsulfanyl-2-oxobutanoate + formate + 2 H(+). The enzyme catalyses 1,2-dihydroxy-5-(methylsulfanyl)pent-1-en-3-one + O2 = 3-(methylsulfanyl)propanoate + CO + formate + 2 H(+). It participates in amino-acid biosynthesis; L-methionine biosynthesis via salvage pathway; L-methionine from S-methyl-5-thio-alpha-D-ribose 1-phosphate: step 5/6. Its function is as follows. Catalyzes 2 different reactions between oxygen and the acireductone 1,2-dihydroxy-3-keto-5-methylthiopentene (DHK-MTPene) depending upon the metal bound in the active site. Fe-containing acireductone dioxygenase (Fe-ARD) produces formate and 2-keto-4-methylthiobutyrate (KMTB), the alpha-ketoacid precursor of methionine in the methionine recycle pathway. Ni-containing acireductone dioxygenase (Ni-ARD) produces methylthiopropionate, carbon monoxide and formate, and does not lie on the methionine recycle pathway. This Physcomitrium patens (Spreading-leaved earth moss) protein is Acireductone dioxygenase 3.